Here is a 231-residue protein sequence, read N- to C-terminus: MQDVLLQVQAVSKSYHDGDVTTQVLTEVDLQVFKGEQLAIVGTSGSGKSTLLHIMGTLDKPSAGKVLLAGEDLYQVSSARQAQIRNQDLGFIYQFHHLLPEFSALENVAMPAFIQGTDRAQAQADAKMLLERVGLGHRMSHIPAELSGGERQRVAIARALINKPKLVLADEPTGNLDAKSGEAVYELIRELANQLGTAFVVVTHDPKLAARMDRQLTMKNGYLQAVAEHAQ.

The 226-residue stretch at 6–231 (LQVQAVSKSY…YLQAVAEHAQ (226 aa)) folds into the ABC transporter domain. ATP is bound at residue 42-49 (GTSGSGKS).

It belongs to the ABC transporter superfamily. Lipoprotein translocase (TC 3.A.1.125) family. The complex is composed of two ATP-binding proteins (LolD) and two transmembrane proteins (LolC and LolE).

It is found in the cell inner membrane. Functionally, part of the ABC transporter complex LolCDE involved in the translocation of mature outer membrane-directed lipoproteins, from the inner membrane to the periplasmic chaperone, LolA. Responsible for the formation of the LolA-lipoprotein complex in an ATP-dependent manner. This chain is Lipoprotein-releasing system ATP-binding protein LolD, found in Shewanella sp. (strain MR-4).